The chain runs to 500 residues: 7-alpha-hydroxycholest-4-en-3-one 12-alpha-hydroxylase (500 aa).

The chain crosses the membrane as a helical span at residues 4–24 (WCTVLGALLTVVGCLCLSLLL). Ser325 carries the post-translational modification Phosphoserine. Cys439 provides a ligand contact to heme.

It belongs to the cytochrome P450 family. Heme is required as a cofactor. As to expression, expressed in liver.

It localises to the endoplasmic reticulum membrane. It is found in the microsome membrane. It carries out the reaction 7alpha-hydroxycholest-4-en-3-one + reduced [NADPH--hemoprotein reductase] + O2 = 7alpha,12alpha-dihydroxycholest-4-en-3-one + oxidized [NADPH--hemoprotein reductase] + H2O + H(+). It catalyses the reaction 5beta-cholestane-3alpha,7alpha-diol + reduced [NADPH--hemoprotein reductase] + O2 = 5beta-cholestane-3alpha,7alpha,12alpha-triol + oxidized [NADPH--hemoprotein reductase] + H2O + H(+). The catalysed reaction is chenodeoxycholate + reduced [NADPH--hemoprotein reductase] + O2 = cholate + oxidized [NADPH--hemoprotein reductase] + H2O + H(+). Its pathway is lipid metabolism; bile acid biosynthesis. A cytochrome P450 monooxygenase involved in primary bile acid biosynthesis. Catalyzes the 12alpha-hydroxylation of 7alpha-hydroxy-4-cholesten-3-one, an intermediate metabolite in cholic acid biosynthesis. Controls biliary balance of cholic acid and chenodeoxycholic acid, ultimately regulating the intestinal absorption of dietary lipids. Mechanistically, uses molecular oxygen inserting one oxygen atom into a substrate, and reducing the second into a water molecule, with two electrons provided by NADPH via cytochrome P450 reductase (CPR; NADPH--hemoprotein reductase). This chain is 7-alpha-hydroxycholest-4-en-3-one 12-alpha-hydroxylase (Cyp8b1), found in Mus musculus (Mouse).